The chain runs to 466 residues: Gamma-glutamylpolyamine synthetase GlnA3 (466 aa).

Residues 127–466 form the GS catalytic domain; the sequence is GRTVLRRIVA…GVAAAYRWKY (340 aa). 2 residues coordinate Mg(2+): E151 and E153. Residue E202 participates in ATP binding. E207 and E214 together coordinate Mg(2+). Residue G259 coordinates L-glutamate. H263 lines the Mg(2+) pocket. S267 is an ATP binding site. L-glutamate is bound by residues R316 and R334. ATP is bound by residues R334 and R339. Residue E355 coordinates Mg(2+).

It belongs to the glutamine synthetase family. The cofactor is Mg(2+). Expressed in mycelium.

The catalysed reaction is spermine + L-glutamate + ATP = gamma-L-glutamylspermine + ADP + phosphate + H(+). The enzyme catalyses spermidine + L-glutamate + ATP = gamma-L-glutamylspermidine + ADP + phosphate + H(+). It catalyses the reaction putrescine + L-glutamate + ATP = gamma-L-glutamylputrescine + ADP + phosphate + H(+). It carries out the reaction cadaverine + L-glutamate + ATP = gamma-L-glutamylcadaverine + ADP + phosphate + H(+). It participates in amine and polyamine degradation; putrescine degradation. It functions in the pathway amine and polyamine degradation; spermidine degradation. The protein operates within amine and polyamine degradation; spermine degradation. Functionally, involved in the catabolism of polyamines. Catalyzes the ATP-dependent gamma-glutamylation of polyamines. Substrates include putrescine, cadaverine, spermidine and spermine, with a preference for long-chain polyamines spermidine and spermine. Is not able to compensate for the loss of glutamine synthetases (GSs). No complementation of the L-glutamine auxotrophy of an E.coli glnA mutant. Involved in morphological differentiation and in the production of secondary metabolites. Together with GlnA2, enables survival of S.coelicolor under exposure to high local environmental polyamine concentrations, which is toxic to the cells. This Streptomyces coelicolor (strain ATCC BAA-471 / A3(2) / M145) protein is Gamma-glutamylpolyamine synthetase GlnA3.